The chain runs to 151 residues: Glycosylation-dependent cell adhesion molecule 1 (151 aa).

Residues 1–19 (MKFFTVLLFVSLAATSLAL) form the signal peptide. Residues 29–123 (MKTQPTDAIP…ENLTKSSQTV (95 aa)) form a disordered region. The segment covering 42–52 (STPTSYTSEES) has biased composition (low complexity). Residues 53–71 (TSSKDLSKEPSIFREELIS) show a composition bias toward basic and acidic residues. Residues Ser-54, Ser-59, Ser-63, and Ser-71 each carry the phosphoserine modification. The span at 103-114 (RPTTSAATTSEE) shows a compositional bias: low complexity. An N-linked (GlcNAc...) asparagine glycan is attached at Asn-115.

It belongs to the PP3/GlyCAM-1 family. In terms of processing, extensively O-glycosylated. In terms of tissue distribution, lymph nodes. Associated with the lumenal surface of the high endothelial venules of peripheral lymph nodes.

The protein resides in the cell membrane. Functionally, adhesion molecule that accomplishes cell binding by presenting carbohydrate(s) to the lectin domain of L-selectin. This is Glycosylation-dependent cell adhesion molecule 1 (Glycam1) from Mus musculus (Mouse).